The primary structure comprises 424 residues: Protein-glutamate methylesterase/protein-glutamine glutaminase (424 aa).

A Response regulatory domain is found at 6–123 (RVLVVDDSAF…SLDDFTRQLT (118 aa)). Asp-57 carries the post-translational modification 4-aspartylphosphate. Residues 177–210 (SRLSPGRSPGGKEGVAGAVSAGSTRGEAIRPGKG) form a disordered region. The CheB-type methylesterase domain occupies 229–423 (RRPGIEVVAI…PAIVALVTGA (195 aa)). Active-site residues include Ser-241, His-268, and Asp-365.

It belongs to the CheB family. Phosphorylated by CheA. Phosphorylation of the N-terminal regulatory domain activates the methylesterase activity.

The protein localises to the cytoplasm. It carries out the reaction [protein]-L-glutamate 5-O-methyl ester + H2O = L-glutamyl-[protein] + methanol + H(+). The catalysed reaction is L-glutaminyl-[protein] + H2O = L-glutamyl-[protein] + NH4(+). Involved in chemotaxis. Part of a chemotaxis signal transduction system that modulates chemotaxis in response to various stimuli. Catalyzes the demethylation of specific methylglutamate residues introduced into the chemoreceptors (methyl-accepting chemotaxis proteins or MCP) by CheR. Also mediates the irreversible deamidation of specific glutamine residues to glutamic acid. The sequence is that of Protein-glutamate methylesterase/protein-glutamine glutaminase from Moorella thermoacetica (strain ATCC 39073 / JCM 9320).